Here is a 193-residue protein sequence, read N- to C-terminus: Holliday junction branch migration complex subunit RuvA (193 aa).

The domain I stretch occupies residues 1 to 63 (MIGKLTGTVT…ENINKLYGFE (63 aa)). The interval 64–148 (CRKSQEVARM…GIASSTNVHI (85 aa)) is domain II. Positions 149–150 (AS) are flexible linker. Residues 150-193 (SEAVSALVKLGFQHKPSHKVVMEIMTKRPAIEIAELITLALKML) form a domain III region.

Belongs to the RuvA family. In terms of assembly, homotetramer. Forms an RuvA(8)-RuvB(12)-Holliday junction (HJ) complex. HJ DNA is sandwiched between 2 RuvA tetramers; dsDNA enters through RuvA and exits via RuvB. An RuvB hexamer assembles on each DNA strand where it exits the tetramer. Each RuvB hexamer is contacted by two RuvA subunits (via domain III) on 2 adjacent RuvB subunits; this complex drives branch migration. In the full resolvosome a probable DNA-RuvA(4)-RuvB(12)-RuvC(2) complex forms which resolves the HJ.

The protein resides in the cytoplasm. Its function is as follows. The RuvA-RuvB-RuvC complex processes Holliday junction (HJ) DNA during genetic recombination and DNA repair, while the RuvA-RuvB complex plays an important role in the rescue of blocked DNA replication forks via replication fork reversal (RFR). RuvA specifically binds to HJ cruciform DNA, conferring on it an open structure. The RuvB hexamer acts as an ATP-dependent pump, pulling dsDNA into and through the RuvAB complex. HJ branch migration allows RuvC to scan DNA until it finds its consensus sequence, where it cleaves and resolves the cruciform DNA. This Neorickettsia sennetsu (strain ATCC VR-367 / Miyayama) (Ehrlichia sennetsu) protein is Holliday junction branch migration complex subunit RuvA.